The sequence spans 205 residues: GTP cyclohydrolase-2 (205 aa).

Residue R49–E53 participates in GTP binding. C54, C65, and C67 together coordinate Zn(2+). GTP contacts are provided by residues Q70, E92 to R94, and T114. The active-site Proton acceptor is the D126. The active-site Nucleophile is R128. T149 and K154 together coordinate GTP.

This sequence belongs to the GTP cyclohydrolase II family. Zn(2+) serves as cofactor.

It carries out the reaction GTP + 4 H2O = 2,5-diamino-6-hydroxy-4-(5-phosphoribosylamino)-pyrimidine + formate + 2 phosphate + 3 H(+). Its pathway is cofactor biosynthesis; riboflavin biosynthesis; 5-amino-6-(D-ribitylamino)uracil from GTP: step 1/4. Its function is as follows. Catalyzes the conversion of GTP to 2,5-diamino-6-ribosylamino-4(3H)-pyrimidinone 5'-phosphate (DARP), formate and pyrophosphate. The protein is GTP cyclohydrolase-2 of Shewanella denitrificans (strain OS217 / ATCC BAA-1090 / DSM 15013).